A 319-amino-acid polypeptide reads, in one-letter code: 33 kDa chaperonin (319 aa).

Positions 1-10 (MTDASGSERL) are enriched in basic and acidic residues. The interval 1–25 (MTDASGSERLKRAKGISEGTPSSLP) is disordered. 2 cysteine pairs are disulfide-bonded: C261–C263 and C294–C297.

Belongs to the HSP33 family. Post-translationally, under oxidizing conditions two disulfide bonds are formed involving the reactive cysteines. Under reducing conditions zinc is bound to the reactive cysteines and the protein is inactive.

It localises to the cytoplasm. Its function is as follows. Redox regulated molecular chaperone. Protects both thermally unfolding and oxidatively damaged proteins from irreversible aggregation. Plays an important role in the bacterial defense system toward oxidative stress. This chain is 33 kDa chaperonin, found in Synechococcus sp. (strain JA-2-3B'a(2-13)) (Cyanobacteria bacterium Yellowstone B-Prime).